Here is a 118-residue protein sequence, read N- to C-terminus: Large ribosomal subunit protein bL19 (118 aa).

The protein belongs to the bacterial ribosomal protein bL19 family.

In terms of biological role, this protein is located at the 30S-50S ribosomal subunit interface and may play a role in the structure and function of the aminoacyl-tRNA binding site. The protein is Large ribosomal subunit protein bL19 of Campylobacter concisus (strain 13826).